Here is a 512-residue protein sequence, read N- to C-terminus: Ribose import ATP-binding protein RbsA 2 (512 aa).

2 consecutive ABC transporter domains span residues 22–258 (LEMR…VGRD) and 263–512 (FPKV…TGNA). 54-61 (GENGAGKS) is an ATP binding site.

Belongs to the ABC transporter superfamily. Ribose importer (TC 3.A.1.2.1) family. In terms of assembly, the complex is composed of an ATP-binding protein (RbsA), two transmembrane proteins (RbsC) and a solute-binding protein (RbsB).

The protein localises to the cell inner membrane. The enzyme catalyses D-ribose(out) + ATP + H2O = D-ribose(in) + ADP + phosphate + H(+). Its function is as follows. Part of the ABC transporter complex RbsABC involved in ribose import. Responsible for energy coupling to the transport system. In Rhizobium johnstonii (strain DSM 114642 / LMG 32736 / 3841) (Rhizobium leguminosarum bv. viciae), this protein is Ribose import ATP-binding protein RbsA 2.